Here is a 188-residue protein sequence, read N- to C-terminus: Probable nicotinate-nucleotide adenylyltransferase (188 aa).

Belongs to the NadD family.

The enzyme catalyses nicotinate beta-D-ribonucleotide + ATP + H(+) = deamido-NAD(+) + diphosphate. It functions in the pathway cofactor biosynthesis; NAD(+) biosynthesis; deamido-NAD(+) from nicotinate D-ribonucleotide: step 1/1. In terms of biological role, catalyzes the reversible adenylation of nicotinate mononucleotide (NaMN) to nicotinic acid adenine dinucleotide (NaAD). In Listeria welshimeri serovar 6b (strain ATCC 35897 / DSM 20650 / CCUG 15529 / CIP 8149 / NCTC 11857 / SLCC 5334 / V8), this protein is Probable nicotinate-nucleotide adenylyltransferase.